The following is a 473-amino-acid chain: Cytochrome P450 716A2 (473 aa).

The chain crosses the membrane as a helical span at residues Met-1–Leu-21. Residue Cys-420 coordinates heme.

Belongs to the cytochrome P450 family. It depends on heme as a cofactor.

The protein resides in the membrane. Its function is as follows. Possesses triterpene oxidizing activity. Catalyzes the C28 hydroxylation of alpha-amyrin, beta-amyrin, and lupeol, producing uvaol, erythrodiol, and betulin, respectively. Catalyzes the C28 carboxylation of alpha- and beta-amyrin. Possesses 22alpha-hydroxylation activity against alpha- and beta-amaryn. The protein is Cytochrome P450 716A2 of Arabidopsis thaliana (Mouse-ear cress).